The sequence spans 162 residues: Regulatory protein RecX (162 aa).

The protein belongs to the RecX family.

It localises to the cytoplasm. Functionally, modulates RecA activity. This is Regulatory protein RecX from Pectobacterium atrosepticum (strain SCRI 1043 / ATCC BAA-672) (Erwinia carotovora subsp. atroseptica).